A 307-amino-acid chain; its full sequence is Mitochondrial glycine transporter (307 aa).

Solcar repeat units follow at residues P8–S87, L115–L199, and T221–R305. Helical transmembrane passes span L14–Q39, G62–L88, L121–E146, G174–K197, V225–M251, and G280–I298.

It belongs to the mitochondrial carrier (TC 2.A.29) family. SLC25A38 subfamily.

Its subcellular location is the mitochondrion. The protein localises to the mitochondrion inner membrane. It catalyses the reaction glycine(in) = glycine(out). In terms of biological role, mitochondrial glycine transporter that imports glycine into the mitochondrial matrix. Plays an important role in providing glycine for the first enzymatic step in heme biosynthesis, the condensation of glycine with succinyl-CoA to produce 5-aminolevulinate (ALA) in the mitochondrial matrix. This Saccharomyces cerevisiae (strain ATCC 204508 / S288c) (Baker's yeast) protein is Mitochondrial glycine transporter.